Reading from the N-terminus, the 1760-residue chain is Chitin synthase A (1760 aa).

An N-linked (GlcNAc...) asparagine glycan is attached at asparagine 157. Helical transmembrane passes span 729 to 749 (IWTGFVWALTFWIPSFVLRFV) and 765 to 785 (LVLVFLILLFNAIVCFYIIAF). N-linked (GlcNAc...) asparagine glycosylation is found at asparagine 876 and asparagine 996. Residues 1027 to 1047 (ILLAFTCLICAVILVKFLAAL) traverse the membrane as a helical segment. N-linked (GlcNAc...) asparagine glycosylation is present at asparagine 1392. 3 helical membrane-spanning segments follow: residues 1417–1437 (FVVLVDLLGTIILPATCVYLG), 1449–1469 (IPIISIAILAGVYGLQAIIFI), and 1477–1497 (IGWMIIYICAYPIYSFVLPMY). Asparagine 1557, asparagine 1645, and asparagine 1650 each carry an N-linked (GlcNAc...) asparagine glycan. Positions 1670–1691 (DNLLGVPRPNSRSPVGGYTSRP) are disordered. Residues 1702 to 1758 (GPDEMAITDAIRSCLAEVDLDTVTKKQVRALVEQRLQATLTGDKRAFLDRQIDQELA) form the DEK-C domain.

This sequence belongs to the chitin synthase family. Class V subfamily.

The protein localises to the cell membrane. It carries out the reaction [(1-&gt;4)-N-acetyl-beta-D-glucosaminyl](n) + UDP-N-acetyl-alpha-D-glucosamine = [(1-&gt;4)-N-acetyl-beta-D-glucosaminyl](n+1) + UDP + H(+). Functionally, polymerizes chitin, a structural polymer of the cell wall and septum, by transferring the sugar moiety of UDP-GlcNAc to the non-reducing end of the growing chitin polymer. Plays an important role in cell-wall formation during both hyphal growth and conidiation. This is Chitin synthase A from Aspergillus oryzae (strain ATCC 42149 / RIB 40) (Yellow koji mold).